The chain runs to 391 residues: Succinate--CoA ligase [ADP-forming] subunit beta (391 aa).

The region spanning 9-245 is the ATP-grasp domain; the sequence is KQIFAEYGVP…LSEEDPDEVE (237 aa). ATP is bound by residues K46, 53–55, E99, A102, and E107; that span reads GRG. Mg(2+)-binding residues include N200 and D214. Residues N265 and 322–324 contribute to the substrate site; that span reads GIV.

It belongs to the succinate/malate CoA ligase beta subunit family. As to quaternary structure, heterotetramer of two alpha and two beta subunits. Mg(2+) serves as cofactor.

It catalyses the reaction succinate + ATP + CoA = succinyl-CoA + ADP + phosphate. It carries out the reaction GTP + succinate + CoA = succinyl-CoA + GDP + phosphate. It participates in carbohydrate metabolism; tricarboxylic acid cycle; succinate from succinyl-CoA (ligase route): step 1/1. Succinyl-CoA synthetase functions in the citric acid cycle (TCA), coupling the hydrolysis of succinyl-CoA to the synthesis of either ATP or GTP and thus represents the only step of substrate-level phosphorylation in the TCA. The beta subunit provides nucleotide specificity of the enzyme and binds the substrate succinate, while the binding sites for coenzyme A and phosphate are found in the alpha subunit. In Sulfurovum sp. (strain NBC37-1), this protein is Succinate--CoA ligase [ADP-forming] subunit beta.